Here is a 412-residue protein sequence, read N- to C-terminus: G-protein coupled receptor homolog UL33 (412 aa).

Residues 1–35 (MDTIIHNTTNRSTDTPHVNITCNITEPLSAIRTTE) are Virion surface-facing. N-linked (GlcNAc...) asparagine; by host glycosylation is found at asparagine 7, asparagine 19, and asparagine 23. A helical membrane pass occupies residues 36–56 (AVINTFIIFVGGPLNAIVLIT). The Intravirion portion of the chain corresponds to 57–80 (QLLTNRVLGYSTPTIYMTNLYSTN). The chain crosses the membrane as a helical span at residues 81-101 (FLTLTVLPFIVLSNQWLLPAS). Residues 102–106 (VASCK) are Virion surface-facing. Cysteine 105 and cysteine 188 form a disulfide bridge. The helical transmembrane segment at 107–127 (FLSVIYYSSCTVGFATVALIA) threads the bilayer. At 128-147 (ADRYRVLHKRTYARQSYRST) the chain is on the intravirion side. Residues 148–168 (YIILLLTWFAGLIFSMPAAVY) traverse the membrane as a helical segment. Residues 169-206 (TTVVIHNGTNGQSSNGHATCVLYFIADEVYTVLLSWKV) are Virion surface-facing. The helical transmembrane segment at 207–227 (LLTLVWGAAPVIMMTWFYAFF) threads the bilayer. Residues 228–244 (YSTVQRASQKQRSRTLT) lie on the Intravirion side of the membrane. The chain crosses the membrane as a helical span at residues 245 to 265 (FVSVLLISFVALQTPYVSIMI). At 266 to 292 (FNSYATAAWPMDCEHLTLRRTIGTLSR) the chain is on the virion surface side. A helical membrane pass occupies residues 293 to 313 (LVPHLHCLINPILYALLGHDF). The Intravirion portion of the chain corresponds to 314–412 (LQRMRQCFRG…SQSHHNLSGV (99 aa)). Residues 377–412 (NFPSGTWKGGQKTASNDTSTKIPHRLSQSHHNLSGV) are disordered. The span at 388-397 (KTASNDTSTK) shows a compositional bias: polar residues.

This sequence belongs to the G-protein coupled receptor 1 family. As to quaternary structure, heterodimerizes with US28.

It is found in the virion. The protein localises to the host cell membrane. Its subcellular location is the host cytoplasm. In terms of biological role, G-protein-coupled receptor (vGPCR) that constitutively activates multiple oncogenic signaling pathways including STAT3, AP-1, phospholipase C, NF-kappa-B or cAMP-responsive element (CRE) pathways. Plays an important role in viral reactivation from latency through activation of host CREB1, facilitating its recruitment to the viral major immediate early (MIE) genes. In turn, expression of the MIE-driven genes such as UL123 are de-repressed. Also facilitates virus dissemination via the extracellular and cell-to-cell route. The sequence is that of G-protein coupled receptor homolog UL33 (UL33) from Human cytomegalovirus (strain Merlin) (HHV-5).